The following is a 306-amino-acid chain: Ornithine carbamoyltransferase (306 aa).

Carbamoyl phosphate contacts are provided by residues 51 to 54 (STRT), Gln78, Arg102, and 129 to 132 (HPVQ). Residues Asn159, Asp223, and 227-228 (SM) contribute to the L-ornithine site. Carbamoyl phosphate contacts are provided by residues 263–264 (CL) and Arg291.

Belongs to the aspartate/ornithine carbamoyltransferase superfamily. OTCase family.

The protein resides in the cytoplasm. It catalyses the reaction carbamoyl phosphate + L-ornithine = L-citrulline + phosphate + H(+). The protein operates within amino-acid biosynthesis; L-arginine biosynthesis; L-arginine from L-ornithine and carbamoyl phosphate: step 1/3. In terms of biological role, reversibly catalyzes the transfer of the carbamoyl group from carbamoyl phosphate (CP) to the N(epsilon) atom of ornithine (ORN) to produce L-citrulline. The chain is Ornithine carbamoyltransferase from Sulfurovum sp. (strain NBC37-1).